The following is a 134-amino-acid chain: D-ribose pyranase (134 aa).

Catalysis depends on H20, which acts as the Proton donor. Residues D28, H101, and 123–125 contribute to the substrate site; that span reads YCN.

This sequence belongs to the RbsD / FucU family. RbsD subfamily. Homodecamer.

The protein resides in the cytoplasm. The enzyme catalyses beta-D-ribopyranose = beta-D-ribofuranose. It participates in carbohydrate metabolism; D-ribose degradation; D-ribose 5-phosphate from beta-D-ribopyranose: step 1/2. Catalyzes the interconversion of beta-pyran and beta-furan forms of D-ribose. In Pseudomonas fluorescens (strain ATCC BAA-477 / NRRL B-23932 / Pf-5), this protein is D-ribose pyranase.